The primary structure comprises 260 residues: Carbonic anhydrase 2 (260 aa).

Ser2 bears the N-acetylserine mark. Ser2 is modified (phosphoserine). One can recognise an Alpha-carbonic anhydrase domain in the interval 3-259 (HHWGYGKHNG…LKNRQIKASF (257 aa)). The active-site Proton donor/acceptor is His64. Zn(2+) contacts are provided by His94, His96, and His119. A phosphoserine mark is found at Ser165 and Ser172. Residue 198–199 (TT) participates in substrate binding.

The protein belongs to the alpha-carbonic anhydrase family. Interacts with SLC4A4. Interaction with SLC4A7 regulates SLC4A7 transporter activity. Interacts with SLC26A6 isoform 4 (via C-terminus cytoplasmic domain). Requires Zn(2+) as cofactor. Co(2+) is required as a cofactor.

Its subcellular location is the cytoplasm. The protein resides in the cell membrane. The enzyme catalyses hydrogencarbonate + H(+) = CO2 + H2O. It carries out the reaction urea = cyanamide + H2O. Activated by X-ray, histamine, L-adrenaline, L- and D-phenylalanine, L- and D-histidine, L-His-OMe and beta-Ala-His (carnosine). Competitively inhibited by saccharin, thioxolone, coumarins, 667-coumate, celecoxib (Celebrex), valdecoxib (Bextra), SC-125, SC-560, diclofenac, acetate, azide, bromide, sulfonamide derivatives such as acetazolamide (AZA), methazolamide (MZA), ethoxzolamide (EZA), dichlorophenamide (DCP), brinzolamide, dansylamide, thiabendazole-5-sulfonamide, trifluoromethane sulfonamide and N-hydroxysulfamide, fructose-based sugar sulfamate RWJ-37497, and Foscarnet (phosphonoformate trisodium salt). Repressed strongly by hydrogen sulfide(HS) and weakly by nitrate (NO(3)). Esterase activity weakly reduced by cyanamide. N-hydroxyurea interferes with zinc binding and inhibit activity. Functionally, catalyzes the reversible hydration of carbon dioxide. Can also hydrate cyanamide to urea. Stimulates the chloride-bicarbonate exchange activity of SLC26A6. Essential for bone resorption and osteoclast differentiation. Involved in the regulation of fluid secretion into the anterior chamber of the eye. Contributes to intracellular pH regulation in the duodenal upper villous epithelium during proton-coupled peptide absorption. The polypeptide is Carbonic anhydrase 2 (CA2) (Homo sapiens (Human)).